Consider the following 356-residue polypeptide: tRNA N6-adenosine threonylcarbamoyltransferase (356 aa).

Residues His115 and His119 each coordinate Fe cation. Residues 138 to 142, Asp171, Gly184, and Asn283 contribute to the substrate site; that span reads LVSGG. A Fe cation-binding site is contributed by Asp311.

It belongs to the KAE1 / TsaD family. Fe(2+) is required as a cofactor.

It localises to the cytoplasm. It catalyses the reaction L-threonylcarbamoyladenylate + adenosine(37) in tRNA = N(6)-L-threonylcarbamoyladenosine(37) in tRNA + AMP + H(+). Required for the formation of a threonylcarbamoyl group on adenosine at position 37 (t(6)A37) in tRNAs that read codons beginning with adenine. Is involved in the transfer of the threonylcarbamoyl moiety of threonylcarbamoyl-AMP (TC-AMP) to the N6 group of A37, together with TsaE and TsaB. TsaD likely plays a direct catalytic role in this reaction. The sequence is that of tRNA N6-adenosine threonylcarbamoyltransferase from Prochlorococcus marinus (strain MIT 9301).